We begin with the raw amino-acid sequence, 356 residues long: Cyclin-D2-2 (356 aa).

A compositionally biased stretch (polar residues) spans 325–343; it reads LGSSQSNSNNKDYNSQDSA. Residues 325–356 form a disordered region; that stretch reads LGSSQSNSNNKDYNSQDSAPASKRRRLNTTPI. The segment covering 346 to 356 has biased composition (basic residues); the sequence is SKRRRLNTTPI.

Belongs to the cyclin family. Cyclin D subfamily.

This is Cyclin-D2-2 (CYCD2-2) from Oryza sativa subsp. japonica (Rice).